Consider the following 404-residue polypeptide: Serpin-Z2B (404 aa).

The interval 349 to 373 (GTEAAAATACTMKFLCLTLTSPVDF) is RCL.

The protein belongs to the serpin family.

Its function is as follows. Probable serine protease inhibitor. The polypeptide is Serpin-Z2B (Oryza sativa subsp. japonica (Rice)).